A 664-amino-acid polypeptide reads, in one-letter code: Phosphomethylpyrimidine synthase (664 aa).

Residues N235, M264, Y293, H329, 349-351, 390-393, and E429 each bind substrate; these read SRG and DGMR. H433 contacts Zn(2+). Y456 is a substrate binding site. H497 is a Zn(2+) binding site. The [4Fe-4S] cluster site is built by C577, C580, and C585.

It belongs to the ThiC family. In terms of assembly, homodimer. [4Fe-4S] cluster is required as a cofactor.

It carries out the reaction 5-amino-1-(5-phospho-beta-D-ribosyl)imidazole + S-adenosyl-L-methionine = 4-amino-2-methyl-5-(phosphooxymethyl)pyrimidine + CO + 5'-deoxyadenosine + formate + L-methionine + 3 H(+). The protein operates within cofactor biosynthesis; thiamine diphosphate biosynthesis. In terms of biological role, catalyzes the synthesis of the hydroxymethylpyrimidine phosphate (HMP-P) moiety of thiamine from aminoimidazole ribotide (AIR) in a radical S-adenosyl-L-methionine (SAM)-dependent reaction. The chain is Phosphomethylpyrimidine synthase from Shewanella amazonensis (strain ATCC BAA-1098 / SB2B).